The sequence spans 283 residues: Acetyl-coenzyme A carboxylase carboxyl transferase subunit beta (283 aa).

The CoA carboxyltransferase N-terminal domain occupies 29-283; sequence LWVACPKCQQ…LKLHERGAHY (255 aa). 4 residues coordinate Zn(2+): Cys-33, Cys-36, Cys-51, and Cys-54. A C4-type zinc finger spans residues 33–54; sequence CPKCQQSIYHKDLGYYRTCPVC.

The protein belongs to the AccD/PCCB family. Acetyl-CoA carboxylase is a heterohexamer composed of biotin carboxyl carrier protein (AccB), biotin carboxylase (AccC) and two subunits each of ACCase subunit alpha (AccA) and ACCase subunit beta (AccD). Zn(2+) serves as cofactor.

It localises to the cytoplasm. The catalysed reaction is N(6)-carboxybiotinyl-L-lysyl-[protein] + acetyl-CoA = N(6)-biotinyl-L-lysyl-[protein] + malonyl-CoA. It participates in lipid metabolism; malonyl-CoA biosynthesis; malonyl-CoA from acetyl-CoA: step 1/1. Its function is as follows. Component of the acetyl coenzyme A carboxylase (ACC) complex. Biotin carboxylase (BC) catalyzes the carboxylation of biotin on its carrier protein (BCCP) and then the CO(2) group is transferred by the transcarboxylase to acetyl-CoA to form malonyl-CoA. The sequence is that of Acetyl-coenzyme A carboxylase carboxyl transferase subunit beta from Latilactobacillus sakei subsp. sakei (strain 23K) (Lactobacillus sakei subsp. sakei).